Here is a 469-residue protein sequence, read N- to C-terminus: Putative dipeptidase SSP1012 (469 aa).

Residue His-84 coordinates Zn(2+). Asp-86 is a catalytic residue. Asp-115 provides a ligand contact to Zn(2+). The Proton acceptor role is filled by Glu-149. 3 residues coordinate Zn(2+): Glu-150, Asp-173, and His-440.

The protein belongs to the peptidase M20A family. Requires Zn(2+) as cofactor.

This Staphylococcus saprophyticus subsp. saprophyticus (strain ATCC 15305 / DSM 20229 / NCIMB 8711 / NCTC 7292 / S-41) protein is Putative dipeptidase SSP1012.